Consider the following 92-residue polypeptide: Islet amyloid polypeptide (92 aa).

The signal sequence occupies residues 1–22 (MCLLRLPVTLLVLCVALNELKA). A propeptide spanning residues 23 to 34 (TSIASDTGHQVG) is cleaved from the precursor. Cys38 and Cys43 are disulfide-bonded. A Tyrosine amide modification is found at Tyr73. A propeptide spanning residues 77 to 92 (NAPQISDRELLHYLPL) is cleaved from the precursor.

It belongs to the calcitonin family. As to quaternary structure, can form homodimers. Interacts with IDE and INS. Interaction with INS inhibits homodimerization and fibril formation.

It is found in the secreted. Its function is as follows. Amylin/IAPP is a glucoregulatory peptide hormone that plays an important role in the regulation of energy homeostasis. Selectively inhibits insulin-stimulated glucose utilization and glycogen deposition in muscle, while not affecting adipocyte glucose metabolism. IAPP function is mediated by the CALCR-RAMPs (AMYRs) receptor complexes. Amylin can also bind CALCR receptor in the absence of RAMPs, although it is more selective for AMYRs. In Cavia porcellus (Guinea pig), this protein is Islet amyloid polypeptide (IAPP).